The primary structure comprises 694 residues: Elongation factor G (694 aa).

Positions 8–287 (EDYRNFGIMA…AVVSYLPSPI (280 aa)) constitute a tr-type G domain. GTP contacts are provided by residues 17–24 (AHIDAGKT), 86–90 (DTPGH), and 140–143 (NKMD).

Belongs to the TRAFAC class translation factor GTPase superfamily. Classic translation factor GTPase family. EF-G/EF-2 subfamily.

Its subcellular location is the cytoplasm. Functionally, catalyzes the GTP-dependent ribosomal translocation step during translation elongation. During this step, the ribosome changes from the pre-translocational (PRE) to the post-translocational (POST) state as the newly formed A-site-bound peptidyl-tRNA and P-site-bound deacylated tRNA move to the P and E sites, respectively. Catalyzes the coordinated movement of the two tRNA molecules, the mRNA and conformational changes in the ribosome. This chain is Elongation factor G, found in Bartonella tribocorum (strain CIP 105476 / IBS 506).